Reading from the N-terminus, the 289-residue chain is Porin (289 aa).

In terms of assembly, homotrimer.

Its subcellular location is the cell outer membrane. Forms channels that allow the passive diffusion of small hydrophilic solutes up to an exclusion limit of about 0.6 kDa. The polypeptide is Porin (opmA) (Fuscovulum blasticum (Rhodobacter blasticus)).